We begin with the raw amino-acid sequence, 234 residues long: Ribonuclease 3 (234 aa).

The 130-residue stretch at 4 to 133 folds into the RNase III domain; the sequence is LLDLEHKLNY…ILGAVYIDSN (130 aa). A Mg(2+)-binding site is contributed by E46. D50 is an active-site residue. Mg(2+)-binding residues include D119 and E122. Residue E122 is part of the active site. Residues 160–228 enclose the DRBM domain; the sequence is DFKSILQEYV…AKALCIKLGV (69 aa).

It belongs to the ribonuclease III family. In terms of assembly, homodimer. The cofactor is Mg(2+).

It localises to the cytoplasm. The catalysed reaction is Endonucleolytic cleavage to 5'-phosphomonoester.. In terms of biological role, digests double-stranded RNA. Involved in the processing of primary rRNA transcript to yield the immediate precursors to the large and small rRNAs (23S and 16S). Processes some mRNAs, and tRNAs when they are encoded in the rRNA operon. Processes pre-crRNA and tracrRNA of type II CRISPR loci if present in the organism. This Fusobacterium nucleatum subsp. nucleatum (strain ATCC 25586 / DSM 15643 / BCRC 10681 / CIP 101130 / JCM 8532 / KCTC 2640 / LMG 13131 / VPI 4355) protein is Ribonuclease 3.